Reading from the N-terminus, the 113-residue chain is UPF0342 protein spyM18_0873 (113 aa).

It belongs to the UPF0342 family.

The sequence is that of UPF0342 protein spyM18_0873 from Streptococcus pyogenes serotype M18 (strain MGAS8232).